The chain runs to 203 residues: Probable Tat proofreading chaperone DmsD (203 aa).

Belongs to the TorD/DmsD family. DmsD subfamily.

Its function is as follows. Required for biogenesis/assembly of DMSO reductase, but not for the interaction of the DmsA signal peptide with the Tat system. May be part of a chaperone cascade complex that facilitates a folding-maturation pathway for the substrate protein. The chain is Probable Tat proofreading chaperone DmsD from Haemophilus influenzae (strain ATCC 51907 / DSM 11121 / KW20 / Rd).